Consider the following 616-residue polypeptide: Prolactin receptor (616 aa).

The first 24 residues, 1–24, serve as a signal peptide directing secretion; it reads MKENVASMIVFLLLLFLNIRLLKG. Topologically, residues 25-234 are extracellular; sequence QSPPGKPFIF…QIPNDFTMKD (210 aa). Fibronectin type-III domains lie at 27–128 and 129–229; these read PPGK…VEPD and PPVN…IPND. A disulfide bridge connects residues Cys36 and Cys46. An N-linked (GlcNAc...) asparagine glycan is attached at Asn59. Cys75 and Cys86 are disulfide-bonded. N-linked (GlcNAc...) asparagine glycans are attached at residues Asn104 and Asn132. Zn(2+) contacts are provided by Asp211 and His212. Residues 215 to 219 carry the WSXWS motif motif; it reads WSVWS. A helical membrane pass occupies residues 235–258; sequence ITVWIFVAVLSTIICLIMVWAVAL. The Cytoplasmic segment spans residues 259–616; the sequence is KGYSMVTCIF…DPACFMHSLH (358 aa). The short motif at 267–275 is the Box 1 motif element; the sequence is IFPPVPGPK. Disordered regions lie at residues 326–375, 454–492, and 568–593; these read MPAH…STFH, QSSK…PKEK, and ESTK…STAP. Basic and acidic residues predominate over residues 463 to 482; the sequence is GEEKATKQREVESSHSKAEQ.

This sequence belongs to the type I cytokine receptor family. Type 1 subfamily. Interacts with SMARCA1. Interacts with NEK3 and VAV2 and this interaction is prolactin-dependent.

The protein localises to the membrane. Its function is as follows. This is a receptor for the anterior pituitary hormone prolactin. This chain is Prolactin receptor (PRLR), found in Oryctolagus cuniculus (Rabbit).